Reading from the N-terminus, the 227-residue chain is Probable methylthioribulose-1-phosphate dehydratase (227 aa).

Cys-87 contacts substrate. Residues His-105 and His-107 each coordinate Zn(2+). Glu-129 (proton donor/acceptor) is an active-site residue. His-185 is a binding site for Zn(2+).

Belongs to the aldolase class II family. MtnB subfamily. Zn(2+) serves as cofactor.

The protein localises to the cytoplasm. The enzyme catalyses 5-(methylsulfanyl)-D-ribulose 1-phosphate = 5-methylsulfanyl-2,3-dioxopentyl phosphate + H2O. It functions in the pathway amino-acid biosynthesis; L-methionine biosynthesis via salvage pathway; L-methionine from S-methyl-5-thio-alpha-D-ribose 1-phosphate: step 2/6. In terms of biological role, catalyzes the dehydration of methylthioribulose-1-phosphate (MTRu-1-P) into 2,3-diketo-5-methylthiopentyl-1-phosphate (DK-MTP-1-P). The sequence is that of Probable methylthioribulose-1-phosphate dehydratase from Drosophila erecta (Fruit fly).